Here is a 462-residue protein sequence, read N- to C-terminus: Probable Xaa-Pro aminopeptidase pepP (462 aa).

Residues D259, D270, E393, and E433 each contribute to the Mn(2+) site.

Belongs to the peptidase M24B family. Mn(2+) serves as cofactor.

It catalyses the reaction Release of any N-terminal amino acid, including proline, that is linked to proline, even from a dipeptide or tripeptide.. Catalyzes the removal of a penultimate prolyl residue from the N-termini of peptides. The polypeptide is Probable Xaa-Pro aminopeptidase pepP (pepP) (Metarhizium robertsii (strain ARSEF 23 / ATCC MYA-3075) (Metarhizium anisopliae (strain ARSEF 23))).